The sequence spans 114 residues: MAVNLYDYANQLEQALRESEEYKAIKEAFANVKANEESKKLFDEFRETQINFQQKQMQGEEIAEEDLQKAQEQAQAIEKDENISALMNAEQKMSQVFQEINQIIVKPLDEIYAD.

The protein belongs to the UPF0342 family.

This Staphylococcus aureus (strain Newman) protein is UPF0342 protein NWMN_1737.